Here is a 127-residue protein sequence, read N- to C-terminus: Small ribosomal subunit protein bS6 (127 aa).

Belongs to the bacterial ribosomal protein bS6 family.

Binds together with bS18 to 16S ribosomal RNA. This chain is Small ribosomal subunit protein bS6, found in Acinetobacter baumannii (strain AB0057).